We begin with the raw amino-acid sequence, 297 residues long: Large ribosomal subunit protein uL18 (297 aa).

An N-acetylglycine modification is found at G2. K5 and K48 each carry N6-acetyllysine. S185 bears the Phosphoserine mark. The residue at position 220 (K220) is an N6-acetyllysine; alternate. K220 participates in a covalent cross-link: Glycyl lysine isopeptide (Lys-Gly) (interchain with G-Cter in SUMO1); alternate. A Glycyl lysine isopeptide (Lys-Gly) (interchain with G-Cter in SUMO2); alternate cross-link involves residue K220. T232 carries the phosphothreonine modification. The segment at 252–297 (VYEKKPKKEVKKKRWNRPKMSLAQKKDRVAQKKASFLRAQERAAES) is disordered. Residues 258-268 (KKEVKKKRWNR) show a composition bias toward basic residues. S272 carries the phosphoserine modification.

It belongs to the universal ribosomal protein uL18 family. In terms of assembly, component of the large ribosomal subunit (LSU). Part of the 5S RNP complex, which is a LSU subcomplex composed of the 5S RNA, RPL5 and RPL11. Component of a hexameric 5S RNP precursor complex, composed of 5S RNA, RRS1, RPF2/BXDC1, RPL5, RPL11 and HEATR3; this complex acts as a precursor for ribosome assembly. Interacts with NVL in an ATP-dependent manner. Interacts with RRP1B. Interacts with IPO5, IPO7 and KPNB1; these interactions may be involved in RPL5 nuclear import for the assembly of ribosomal subunits.

The protein localises to the cytoplasm. Its subcellular location is the nucleus. It localises to the nucleolus. Component of the ribosome, a large ribonucleoprotein complex responsible for the synthesis of proteins in the cell. The small ribosomal subunit (SSU) binds messenger RNAs (mRNAs) and translates the encoded message by selecting cognate aminoacyl-transfer RNA (tRNA) molecules. The large subunit (LSU) contains the ribosomal catalytic site termed the peptidyl transferase center (PTC), which catalyzes the formation of peptide bonds, thereby polymerizing the amino acids delivered by tRNAs into a polypeptide chain. The nascent polypeptides leave the ribosome through a tunnel in the LSU and interact with protein factors that function in enzymatic processing, targeting, and the membrane insertion of nascent chains at the exit of the ribosomal tunnel. As part of the 5S RNP/5S ribonucleoprotein particle it is an essential component of the LSU, required for its formation and the maturation of rRNAs. It also couples ribosome biogenesis to p53/TP53 activation. As part of the 5S RNP it accumulates in the nucleoplasm and inhibits MDM2, when ribosome biogenesis is perturbed, mediating the stabilization and the activation of TP53. This Bos taurus (Bovine) protein is Large ribosomal subunit protein uL18 (RPL5).